The primary structure comprises 90 residues: Small ribosomal subunit protein bS18 (90 aa).

It belongs to the bacterial ribosomal protein bS18 family. In terms of assembly, part of the 30S ribosomal subunit. Forms a tight heterodimer with protein bS6.

Binds as a heterodimer with protein bS6 to the central domain of the 16S rRNA, where it helps stabilize the platform of the 30S subunit. In Bordetella bronchiseptica (strain ATCC BAA-588 / NCTC 13252 / RB50) (Alcaligenes bronchisepticus), this protein is Small ribosomal subunit protein bS18.